A 60-amino-acid polypeptide reads, in one-letter code: Small, acid-soluble spore protein H 1 (60 aa).

The tract at residues 39–60 (IHPLDNPNQKQSVPVASLEEHS) is disordered.

This sequence belongs to the SspH family.

The protein localises to the spore core. The polypeptide is Small, acid-soluble spore protein H 1 (Geobacillus kaustophilus (strain HTA426)).